The primary structure comprises 329 residues: MGRPRRRGRDINGVLLLDKPLGLSSNDVLQKVKRLFSANRAGHTGALDPLATGMLPICLGEATKFSQFLLDSDKRYRVVARLGQRTDTSDAEGALISEREVNVTQAQMDAALDSFRGSSQQVPSMYSALKHQGKPLYEYARQGIEVEREARSITVYELLFIRWEGNDLELEIHCSKGTYIRTIIDDLGELLGCGAHVSYLRRLQVATYPSDRMVTLEQLTAIVETAQAEERSPNAELDALLLPMDSAVLNFPEVNLLPAVAAYVKQGQPVHVAGTPGEGMVRITEGEERNFIGIGTIAEDGRVAPKRLVVEHVDGANPVVAGVAAGNTP.

Position 43 (histidine 43) interacts with substrate. The active-site Nucleophile is aspartate 48. Substrate is bound by residues tyrosine 76, tyrosine 179, and leucine 200.

This sequence belongs to the pseudouridine synthase TruB family. Type 1 subfamily.

It carries out the reaction uridine(55) in tRNA = pseudouridine(55) in tRNA. Functionally, responsible for synthesis of pseudouridine from uracil-55 in the psi GC loop of transfer RNAs. In Yersinia enterocolitica serotype O:8 / biotype 1B (strain NCTC 13174 / 8081), this protein is tRNA pseudouridine synthase B.